The primary structure comprises 317 residues: MTINDSVISEQGMCEEEQVARIAWFYYHDGLTQSEISDRLGLTRLKVSRLLEKGHQSGIIRVQINSRFEGCLEYETQLCRQFSLQHVRVIPGLADADVGGRLGIGAAHMLMSLLQPQQMLAIGFGEATMNTLQRLSGFISSQQIRLVTLSGGVGSYMTGIGQLNAACSVNIIPAPLRASSADIAHTLKNENCVKDVLLAAQAADVAIVGIGAVSQQDDATIIRSGYISQGEQLMIGRKGAVGDILGYFFDAKGDVVTDIKIHNELIGLPLSALKTIPVRVGVAGGENKAEAIAAAMKGGYINALVTDQDTAAAILRS.

The segment at residues 33–56 (QSEISDRLGLTRLKVSRLLEKGHQ) is a DNA-binding region (H-T-H motif).

Belongs to the SorC transcriptional regulatory family.

The protein resides in the cytoplasm. With respect to regulation, inactivated by phosphorylated autoinducer-2 (phospho-AI-2). Phospho-AI-2 acts by binding to LsrR, which is then unable to bind to the promoter regions, allowing the transcription of the target genes. Transcriptional regulator that represses the expression of the lsr operon in the absence of the quorum-sensing signaling molecule autoinducer 2 (AI-2). It also represses the expression of the lsrRK operon. Acts by binding directly to the lsrA and lsrR promoter regions. In the presence of phosphorylated autoinducer-2 (phospho-AI-2), LsrR is inactivated, leading to the transcription of the genes. This Escherichia coli (strain SMS-3-5 / SECEC) protein is Transcriptional regulator LsrR (lsrR).